The chain runs to 158 residues: Curculin-2 (158 aa).

The N-terminal stretch at 1–22 (MAAKFLLTILVTFAAVASLGMA) is a signal peptide. A Bulb-type lectin domain is found at 23 to 131 (DSVLLSGQTL…VLWPLGLNGC (109 aa)). A disulfide bridge links Cys-51 with Cys-74. Asn-103 is a glycosylation site (N-linked (GlcNAc...) asparagine). A propeptide spanning residues 136–158 (GEITVAKDSTEPQHEDIKMVINN) is cleaved from the precursor.

As to quaternary structure, heterodimer with curculin-1; Disulfide-linked.

Its function is as follows. Taste-modifying protein; sweet-tasting. After curculin, water elicits a sweet taste, and sour substances induce a stronger sense of sweetness. The sequence is that of Curculin-2 from Molineria latifolia (Lumbah).